The chain runs to 396 residues: Ribosomal RNA large subunit methyltransferase I (396 aa).

Residues 2 to 79 (AIRIKLKPGR…REEEIDREFF (78 aa)) enclose the PUA domain.

This sequence belongs to the methyltransferase superfamily. RlmI family.

The protein localises to the cytoplasm. It carries out the reaction cytidine(1962) in 23S rRNA + S-adenosyl-L-methionine = 5-methylcytidine(1962) in 23S rRNA + S-adenosyl-L-homocysteine + H(+). Specifically methylates the cytosine at position 1962 (m5C1962) of 23S rRNA. The sequence is that of Ribosomal RNA large subunit methyltransferase I from Shewanella baltica (strain OS155 / ATCC BAA-1091).